The chain runs to 310 residues: Homoserine kinase (310 aa).

91–101 (PIGSGLGSSAC) is a binding site for ATP.

It belongs to the GHMP kinase family. Homoserine kinase subfamily.

The protein localises to the cytoplasm. It catalyses the reaction L-homoserine + ATP = O-phospho-L-homoserine + ADP + H(+). It participates in amino-acid biosynthesis; L-threonine biosynthesis; L-threonine from L-aspartate: step 4/5. Catalyzes the ATP-dependent phosphorylation of L-homoserine to L-homoserine phosphate. This chain is Homoserine kinase, found in Escherichia coli O17:K52:H18 (strain UMN026 / ExPEC).